The following is a 300-amino-acid chain: Delta(7)-sterol 5(6)-desaturase erg31 (300 aa).

Transmembrane regions (helical) follow at residues Ile33–Leu53, Val78–Ala98, and Tyr117–His137. In terms of domain architecture, Fatty acid hydroxylase spans Pro123 to Asn248. A Histidine box-1 motif is present at residues His137–His141. Residues His150–His154 carry the Histidine box-2 motif. A helical membrane pass occupies residues His180–Val200. Positions His225–His229 match the Histidine box-3 motif.

It belongs to the sterol desaturase family. It depends on Fe cation as a cofactor.

The protein localises to the endoplasmic reticulum membrane. The catalysed reaction is episterol + 2 Fe(II)-[cytochrome b5] + O2 + 2 H(+) = 5-dehydroepisterol + 2 Fe(III)-[cytochrome b5] + 2 H2O. The protein operates within steroid metabolism; ergosterol biosynthesis. Functionally, C-5 sterol desaturase; part of the third module of ergosterol biosynthesis pathway that includes by the late steps of the pathway. Erg31 and erg32 catalyze the introduction of a C-5 double bond in the B ring to produce 5-dehydroepisterol. The third module or late pathway involves the ergosterol synthesis itself through consecutive reactions that mainly occur in the endoplasmic reticulum (ER) membrane. Firstly, the squalene synthase erg9 catalyzes the condensation of 2 farnesyl pyrophosphate moieties to form squalene, which is the precursor of all steroids. Secondly, squalene is converted into lanosterol by the consecutive action of the squalene epoxidase erg1 and the lanosterol synthase erg7. The lanosterol 14-alpha-demethylase erg11/cyp1 catalyzes C14-demethylation of lanosterol to produce 4,4'-dimethyl cholesta-8,14,24-triene-3-beta-ol. In the next steps, a complex process involving various demethylation, reduction and desaturation reactions catalyzed by the C-14 reductase erg24 and the C-4 demethylation complex erg25-erg26-erg27 leads to the production of zymosterol. Erg28 likely functions in the C-4 demethylation complex reaction by tethering erg26 and Erg27 to the endoplasmic reticulum or to facilitate interaction between these proteins. Then, the sterol 24-C-methyltransferase erg6 catalyzes the methyl transfer from S-adenosyl-methionine to the C-24 of zymosterol to form fecosterol. The C-8 sterol isomerase erg2 catalyzes the reaction which results in unsaturation at C-7 in the B ring of sterols and thus converts fecosterol to episterol. The sterol-C5-desaturases erg31 and erg32 then catalyze the introduction of a C-5 double bond in the B ring to produce 5-dehydroepisterol. The C-22 sterol desaturase erg5 further converts 5-dehydroepisterol into ergosta-5,7,22,24(28)-tetraen-3beta-ol by forming the C-22(23) double bond in the sterol side chain. Finally, ergosta-5,7,22,24(28)-tetraen-3beta-ol is substrate of the C-24(28) sterol reductase erg4 to produce ergosterol. In the genus Schizosaccharomyces, a second route exists between lanosterol and fecosterol, via the methylation of lanosterol to eburicol by erg6, followed by C14-demethylation by erg11/cyp1 and C4-demethylation by the demethylation complex erg25-erg26-erg27. The sequence is that of Delta(7)-sterol 5(6)-desaturase erg31 from Schizosaccharomyces pombe (strain 972 / ATCC 24843) (Fission yeast).